We begin with the raw amino-acid sequence, 720 residues long: XIMVEKDPVKTSFEKWAQPGHFSKALAKGPSTTTWIWNLHADAHDFDSHTNDLEDISRKIFSAHFGQLGIIFIWLSGMYFHGARFSNYEAWLNDPTHVKPSAQVVWPIVGQEILNGDVGGGFQGIQITSGFFQLWRASGITSELQLYCTAIGGLIFAGLMFFAGWFHYHKAAPKLAWFQNVESMLNHHLAGLLGLGSLAWAGHQIHVSLPINQLLDAGVDPKEIPLPHEFILNRELMAQTFPSFAKGLIPFFTLDWSEYSDFLTFRGGLNPVTGGLWLTDTAHHHLAIAVLFLVAGHMYRTXXXXXXXXXXXXXXXXXXXXXXXXXXXXXXXXXXXXXXXXXXXXXXXXXXXXXAHHMYAMPPYPYLATDYATQLSLFTHHMWIGGFLIVGAAAHAAIFMVRDYDPTTQYNNLLDRVIRHRDAIISHLNWVCIFLGFHSFGLYIHNDTMSALGRPQDMFSDTAIQLQPVFAQWVQNTHALAPGSTAPNAAASTSPTWGGSDLVAVGGKVALAPIPLGTADFLVHHIHAFTIHVTVLILLKGVLFARSSRLIPDKANLGFRFPCDGPGRGGTCQVSAWDHVFLGLFWMYNSISVVIFHFSWKMQSDVWGSISEEGVVNHITGGNFAQSSTTINGWLRDFLWAQASQVIQSYGSSLSAYGLLFLGAHFVWAFSLMFLFSGRGYWQELIESIVWAHNKLKVAPVTQPRALSIIQGRAVGVAHY.

Transmembrane regions (helical) follow at residues 60-83 (IFSA…FHGA), 146-169 (LYCT…FHYH), 185-209 (LNHH…HVSL), 281-299 (TAHH…GHMY), 336-359 (XXXX…HHMY), 375-401 (LSLF…IFMV), 423-445 (AIIS…LYIH), and 521-539 (FLVH…LILL). Residues Cys-563 and Cys-572 each coordinate [4Fe-4S] cluster. The next 2 helical transmembrane spans lie at 579–600 (HVFL…HFSW) and 654–676 (LSAY…MFLF). His-665 provides a ligand contact to chlorophyll a'. 2 residues coordinate chlorophyll a: Met-673 and Tyr-681. Trp-682 is a phylloquinone binding site. A helical transmembrane segment spans residues 714–720 (AVGVAHY).

Belongs to the PsaA/PsaB family. In terms of assembly, the PsaA/B heterodimer binds the P700 chlorophyll special pair and subsequent electron acceptors. PSI consists of a core antenna complex that captures photons, and an electron transfer chain that converts photonic excitation into a charge separation. The eukaryotic PSI reaction center is composed of at least 11 subunits. P700 is a chlorophyll a/chlorophyll a' dimer, A0 is one or more chlorophyll a, A1 is one or both phylloquinones and FX is a shared 4Fe-4S iron-sulfur center. serves as cofactor.

It is found in the plastid. The protein resides in the chloroplast thylakoid membrane. The enzyme catalyses reduced [plastocyanin] + hnu + oxidized [2Fe-2S]-[ferredoxin] = oxidized [plastocyanin] + reduced [2Fe-2S]-[ferredoxin]. Functionally, psaA and PsaB bind P700, the primary electron donor of photosystem I (PSI), as well as the electron acceptors A0, A1 and FX. PSI is a plastocyanin-ferredoxin oxidoreductase, converting photonic excitation into a charge separation, which transfers an electron from the donor P700 chlorophyll pair to the spectroscopically characterized acceptors A0, A1, FX, FA and FB in turn. Oxidized P700 is reduced on the lumenal side of the thylakoid membrane by plastocyanin. The sequence is that of Photosystem I P700 chlorophyll a apoprotein A1 (psaA) from Marsilea botryocarpa (Water clover).